Consider the following 230-residue polypeptide: 2-C-methyl-D-erythritol 4-phosphate cytidylyltransferase (230 aa).

Belongs to the IspD/TarI cytidylyltransferase family. IspD subfamily.

It carries out the reaction 2-C-methyl-D-erythritol 4-phosphate + CTP + H(+) = 4-CDP-2-C-methyl-D-erythritol + diphosphate. Its pathway is isoprenoid biosynthesis; isopentenyl diphosphate biosynthesis via DXP pathway; isopentenyl diphosphate from 1-deoxy-D-xylulose 5-phosphate: step 2/6. Functionally, catalyzes the formation of 4-diphosphocytidyl-2-C-methyl-D-erythritol from CTP and 2-C-methyl-D-erythritol 4-phosphate (MEP). This Shewanella halifaxensis (strain HAW-EB4) protein is 2-C-methyl-D-erythritol 4-phosphate cytidylyltransferase.